Reading from the N-terminus, the 470-residue chain is Glutamate--tRNA ligase (470 aa).

Residues 9-19 (PSPTGFLHVGG) carry the 'HIGH' region motif. Positions 236-240 (KLSKR) match the 'KMSKS' region motif. K239 provides a ligand contact to ATP.

The protein belongs to the class-I aminoacyl-tRNA synthetase family. Glutamate--tRNA ligase type 1 subfamily. As to quaternary structure, monomer.

The protein localises to the cytoplasm. It catalyses the reaction tRNA(Glu) + L-glutamate + ATP = L-glutamyl-tRNA(Glu) + AMP + diphosphate. Functionally, catalyzes the attachment of glutamate to tRNA(Glu) in a two-step reaction: glutamate is first activated by ATP to form Glu-AMP and then transferred to the acceptor end of tRNA(Glu). The chain is Glutamate--tRNA ligase from Psychromonas ingrahamii (strain DSM 17664 / CCUG 51855 / 37).